The following is a 424-amino-acid chain: Inhibin beta A chain (424 aa).

The signal sequence occupies residues 1-20; it reads MPLLWLRGFLLASCWIIVRS. The propeptide occupies 21–308; sequence SPTPGSEGHG…EDHPHRRRRR (288 aa). Asparagine 165 carries N-linked (GlcNAc...) asparagine glycosylation. Over residues 264 to 275 the composition is skewed to basic and acidic residues; it reads EVDGDGKKKDGS. The segment at 264–306 is disordered; sequence EVDGDGKKKDGSDGGLEEEKEQSHRPFLMLQARQSEDHPHRRR. Disulfide bonds link cysteine 312/cysteine 320, cysteine 319/cysteine 389, cysteine 348/cysteine 421, and cysteine 352/cysteine 423.

The protein belongs to the TGF-beta family. As to quaternary structure, dimeric, linked by one or more disulfide bonds. Inhibin A is a dimer of alpha/INHA and beta-A/INHBA. Activin A is a homodimer of beta-A/INHBA. Activin AB is a dimer of beta-A/INHBA and beta-B/INHBB. Interacts with FST and FSTL3; these interactions prevent activin A interaction to its type II receptor. Activin A interacts with ACVR2A. Activin A interacts with BMPR2. Inhibin A interacts with ACVR1; this interaction creates a non-signaling complex (NSC) that inhibits ACVR1-mediated BMP signaling. Inhibin A interacts with ACVR2A.

The protein resides in the secreted. Functionally, inhibins/activins are involved in regulating a number of diverse functions such as hypothalamic and pituitary hormone secretion, gonadal hormone secretion, germ cell development and maturation, erythroid differentiation, insulin secretion, nerve cell survival, embryonic axial development or bone growth, depending on their subunit composition. In terms of biological role, activin A is a homodimer of INHBA that plays a role in several essential biological processes including embryonic development, stem cell maintenance and differentiation, haematopoiesis, cell proliferation and tissue fibrosis. Signals through type I (such as ACVR1B or ACVR1C) and type II receptors (such as ACVR2A, ACVR2B or BMPR2) which, upon ligand binding, phosphorylate SMAD2 and SMAD3 intracellular signaling mediators that form a complex with SMAD4, translocate to the nucleus and modulate gene expression. Can also activate alternative non-canonical intracellular signaling pathways including the p38 MAPK, extracellular signal-regulated kinases 1/2 (ERK1/2) and c-Jun N-terminal kinases (JNKs) to modulate cell migration and differentiation. Alternatively, promotes osteoblastic differentiation via ACVRL1-SMAD1/5/9 pathway. In addition, can engage the type I receptor ACVR1 to form an ACVR1-activin A-type II receptor non-signaling complex (NSC) that renders receptors unavailable for engagement with BMPs, hence resulting in an apparent inhibition of ACVR1-mediated BMP signaling. Inhibin A is a dimer of alpha/INHA and beta-A/INHBA that functions as a feedback regulator in the hypothalamic-pituitary-gonadal (HPG) axis. Inhibits the secretion of FSH from the anterior pituitary gland by acting on pituitary gonadotrope cells. Antagonizes activin A by binding to the proteoglycan, betaglycan, and forming a stable complex with and, thereby, sequestering type II activin receptors while excluding type I receptor. This Rattus norvegicus (Rat) protein is Inhibin beta A chain (Inhba).